The primary structure comprises 185 residues: MGRSKKSRKPGALGAPEPMVTRNRSESDVEGRERKRVKKRKGLKSGSRHSDGSEAKQRKAALARDPRLGSKKKIPLIVEPAKKLTKQERKLSNEQELEMLENDAQLNTLLDRIENGENLGAGLQKFVDEKLDRIEHLMGRLGLLEPEDDEEEIFEEAPVASKKKASSDEDLLSQFEDFDLDSFKG.

Disordered stretches follow at residues 1–74 (MGRS…KKKI) and 145–169 (EPED…SSDE). Positions 23–33 (NRSESDVEGRE) are enriched in basic and acidic residues. A compositionally biased stretch (basic residues) spans 34-47 (RKRVKKRKGLKSGS). Basic and acidic residues predominate over residues 48–68 (RHSDGSEAKQRKAALARDPRL). Over residues 145-155 (EPEDDEEEIFE) the composition is skewed to acidic residues.

The protein belongs to the YihI family. In terms of assembly, interacts with Der.

In terms of biological role, a GTPase-activating protein (GAP) that modifies Der/EngA GTPase function. May play a role in ribosome biogenesis. The chain is Der GTPase-activating protein YihI from Vibrio atlanticus (strain LGP32) (Vibrio splendidus (strain Mel32)).